We begin with the raw amino-acid sequence, 503 residues long: ATP synthase subunit alpha (503 aa).

An ATP-binding site is contributed by 169 to 176; the sequence is GDRQTGKT.

It belongs to the ATPase alpha/beta chains family. As to quaternary structure, F-type ATPases have 2 components, CF(1) - the catalytic core - and CF(0) - the membrane proton channel. CF(1) has five subunits: alpha(3), beta(3), gamma(1), delta(1), epsilon(1). CF(0) has three main subunits: a(1), b(2) and c(9-12). The alpha and beta chains form an alternating ring which encloses part of the gamma chain. CF(1) is attached to CF(0) by a central stalk formed by the gamma and epsilon chains, while a peripheral stalk is formed by the delta and b chains.

Its subcellular location is the cell membrane. It carries out the reaction ATP + H2O + 4 H(+)(in) = ADP + phosphate + 5 H(+)(out). Functionally, produces ATP from ADP in the presence of a proton gradient across the membrane. The alpha chain is a regulatory subunit. The protein is ATP synthase subunit alpha of Staphylococcus epidermidis (strain ATCC 35984 / DSM 28319 / BCRC 17069 / CCUG 31568 / BM 3577 / RP62A).